We begin with the raw amino-acid sequence, 254 residues long: Large ribosomal subunit protein uL2 (254 aa).

This sequence belongs to the universal ribosomal protein uL2 family.

The sequence is that of Large ribosomal subunit protein uL2 (RPL2) from Eremothecium gossypii (strain ATCC 10895 / CBS 109.51 / FGSC 9923 / NRRL Y-1056) (Yeast).